The sequence spans 60 residues: Prokaryotic ubiquitin-like protein UBact (60 aa).

The interval M1 to E60 is disordered. Over residues P29–Q50 the composition is skewed to basic and acidic residues. Residues A51 to E60 are compositionally biased toward basic residues. Residue E60 forms an Isoglutamyl lysine isopeptide (Glu-Lys) (interchain with K-? in acceptor proteins) linkage.

It belongs to the ubiquitin-like protein UBact family.

May function as a protein modifier covalently attached to lysine residues of substrate proteins. This may serve to target the modified proteins for degradation by proteasomes. This chain is Prokaryotic ubiquitin-like protein UBact, found in Fraserbacteria sp. (strain RBG_16_55_9).